Consider the following 591-residue polypeptide: Fidgetin-like protein 1 (591 aa).

Disordered regions lie at residues 1–117 (MYSP…KSSL) and 223–249 (GQEPQKSKFQIPLDRQSSSQSNHSQPI). A compositionally biased stretch (basic and acidic residues) spans 17-26 (KRPETEENRG). The span at 76–93 (DDDPESIVIDEDDEEDEP) shows a compositional bias: acidic residues. Over residues 237-249 (RQSSSQSNHSQPI) the composition is skewed to polar residues. Residues Ala319 and 359 to 364 (GTGKTM) contribute to the ATP site.

This sequence belongs to the AAA ATPase family. In terms of assembly, hexamer. It depends on Mg(2+) as a cofactor.

It is found in the nucleus. It catalyses the reaction ATP + H2O = ADP + phosphate + H(+). In terms of biological role, has a role in spindle assembly which acts in the progression through mitosis during embryogenesis. Required for fertility. This is Fidgetin-like protein 1 (figl-1) from Caenorhabditis briggsae.